Reading from the N-terminus, the 358-residue chain is DnaJ homolog subfamily B member 11 (358 aa).

The N-terminal stretch at M1–A22 is a signal peptide. In terms of domain architecture, J spans D25 to G90. Position 188 is a phosphothreonine (T188). N-linked (GlcNAc...) asparagine glycosylation occurs at N261.

In terms of assembly, part of a large chaperone multiprotein complex comprising DNAJB11, HSP90B1, HSPA5, HYOU, PDIA2, PDIA4, PDIA6, PPIB, SDF2L1, UGGT1 and very small amounts of ERP29, but not, or at very low levels, CALR nor CANX. Binds to denatured substrates in an ATP-independent manner. Interacts via the J domain with HSPA5 in an ATP-dependent manner. In terms of processing, contains high-mannose Endo H-sensitive carbohydrates. Post-translationally, cys-169, Cys-171, Cys-193 and Cys-196 form intramolecular disulfide bonds. The preferential partner for each Cys is not known.

Its subcellular location is the endoplasmic reticulum lumen. In terms of biological role, as a co-chaperone for HSPA5 it is required for proper folding, trafficking or degradation of proteins. Binds directly to both unfolded proteins that are substrates for ERAD and nascent unfolded peptide chains, but dissociates from the HSPA5-unfolded protein complex before folding is completed. May help recruiting HSPA5 and other chaperones to the substrate. Stimulates HSPA5 ATPase activity. It is necessary for maturation and correct trafficking of PKD1. The chain is DnaJ homolog subfamily B member 11 (Dnajb11) from Rattus norvegicus (Rat).